We begin with the raw amino-acid sequence, 922 residues long: Coronin-7 (922 aa).

WD repeat units lie at residues 75–115 (CHSD…EALP), 124–163 (PEEL…PLTE), 166–205 (AHKD…QASQ), and 209–253 (AHEN…SALA). The segment at 419–467 (DTDLSEGFSSPSSLMSPSTPSSLGPSLSSTSGIGTSPSQRSLQSLLGPS) is disordered. Over residues 427–456 (SSPSSLMSPSTPSSLGPSLSSTSGIGTSPS) the composition is skewed to low complexity. Serine 459 and serine 462 each carry phosphoserine. A Glycyl lysine isopeptide (Lys-Gly) (interchain with G-Cter in ubiquitin) cross-link involves residue lysine 469. WD repeat units follow at residues 539-581 (QNGT…NVLT), 589-629 (GHTE…ERLK), 632-671 (GHQD…LPLQ), and 725-765 (DVAP…PFFL). The disordered stretch occupies residues 858–922 (GMTPVSQAPR…FEGVDEDEWD (65 aa)). The segment covering 881 to 893 (LEEKSDQQKKEEL) has biased composition (basic and acidic residues). Serine 912 is modified (phosphoserine).

The protein belongs to the WD repeat coronin family. In terms of assembly, interacts with clathrin adapter AP1 complex. This interaction takes place at Golgi membranes and not AP1-positive endosomal membranes. Interacts (when ubiquitinated at Lys-469) with EPS15. Post-translationally, the membrane-associated form is phosphorylated on tyrosine residues. Ubiquitinated via 'Lys-33'-linked ubiquitin chains by the BCR(KLHL20) E3 ubiquitin ligase complex: 'Lys-33'-linked ubiquitination promotes interaction with EPS15 and facilitates actin polymerization at the trans-Golgi network, thereby facilitating post-Golgi trafficking. Deubiquitinated by ZRANB1/TRABID. As to expression, in the adult, widely expressed with highest levels in brain, thymus and kidney and low levels in skeletal and heart muscle. Not expressed in lung. In the eye, strongly expressed in the outer plexiform layer of the retina. In the intestine, expressed both in terminally differentiated epithelial cells and in crypt epithelium. In the embryo, strongest expression is seen in brain, thymus, intestine, apical epidermal layers of the skin and developing lens fibers of the eye.

Its subcellular location is the golgi apparatus membrane. The protein localises to the golgi apparatus. It localises to the trans-Golgi network. It is found in the cytoplasmic vesicle. The protein resides in the cytoplasm. Its subcellular location is the cytosol. F-actin regulator involved in anterograde Golgi to endosome transport: upon ubiquitination via 'Lys-33'-linked ubiquitin chains by the BCR(KLHL20) E3 ubiquitin ligase complex, interacts with EPS15 and localizes to the trans-Golgi network, where it promotes actin polymerization, thereby facilitating post-Golgi trafficking. May play a role in the maintenance of the Golgi apparatus morphology. This is Coronin-7 (Coro7) from Mus musculus (Mouse).